The following is a 232-amino-acid chain: Probable proteasome subunit alpha type-3 (232 aa).

Belongs to the peptidase T1A family. As to quaternary structure, the 26S proteasome consists of a 20S proteasome core and two 19S regulatory subunits. The 20S proteasome core is composed of 28 subunits that are arranged in four stacked rings, resulting in a barrel-shaped structure. The two end rings are each formed by seven alpha subunits, and the two central rings are each formed by seven beta subunits. The catalytic chamber with the active sites is on the inside of the barrel.

It localises to the cytoplasm. It is found in the nucleus. The proteasome degrades poly-ubiquitinated proteins in the cytoplasm and in the nucleus. It is essential for the regulated turnover of proteins and for the removal of misfolded proteins. The proteasome is a multicatalytic proteinase complex that is characterized by its ability to cleave peptides with Arg, Phe, Tyr, Leu, and Glu adjacent to the leaving group at neutral or slightly basic pH. It has an ATP-dependent proteolytic activity. This Encephalitozoon cuniculi (strain GB-M1) (Microsporidian parasite) protein is Probable proteasome subunit alpha type-3 (PRE9).